A 310-amino-acid polypeptide reads, in one-letter code: Ribosomal protein uL3 glutamine methyltransferase (310 aa).

It belongs to the protein N5-glutamine methyltransferase family. PrmB subfamily.

The catalysed reaction is L-glutaminyl-[ribosomal protein uL3] + S-adenosyl-L-methionine = N(5)-methyl-L-glutaminyl-[ribosomal protein uL3] + S-adenosyl-L-homocysteine + H(+). Functionally, specifically methylates large ribosomal subunit protein uL3 on 'Gln-150'. The protein is Ribosomal protein uL3 glutamine methyltransferase of Shigella dysenteriae serotype 1 (strain Sd197).